Reading from the N-terminus, the 296-residue chain is tRNA dimethylallyltransferase (296 aa).

An ATP-binding site is contributed by 2-9 (GPTASGKT). 4-9 (TASGKT) lines the substrate pocket. 3 interaction with substrate tRNA regions span residues 27-30 (DSAL), 151-155 (QRLAR), and 232-237 (RCVGYR).

It belongs to the IPP transferase family. As to quaternary structure, monomer. The cofactor is Mg(2+).

The catalysed reaction is adenosine(37) in tRNA + dimethylallyl diphosphate = N(6)-dimethylallyladenosine(37) in tRNA + diphosphate. Functionally, catalyzes the transfer of a dimethylallyl group onto the adenine at position 37 in tRNAs that read codons beginning with uridine, leading to the formation of N6-(dimethylallyl)adenosine (i(6)A). In Shewanella pealeana (strain ATCC 700345 / ANG-SQ1), this protein is tRNA dimethylallyltransferase.